The primary structure comprises 103 residues: Large ribosomal subunit protein bL21 (103 aa).

It belongs to the bacterial ribosomal protein bL21 family. Part of the 50S ribosomal subunit. Contacts protein L20.

Its function is as follows. This protein binds to 23S rRNA in the presence of protein L20. This is Large ribosomal subunit protein bL21 from Mycobacterium tuberculosis (strain ATCC 25618 / H37Rv).